Consider the following 327-residue polypeptide: Serpentine receptor class alpha-33 (327 aa).

The next 6 helical transmembrane spans lie at 20 to 40 (FSVY…VLAI), 56 to 76 (LLIT…FLQN), 133 to 153 (FSHA…STVF), 186 to 206 (IIPY…LIIY), 227 to 247 (AVVS…LFCF), and 270 to 290 (IIGW…AVFL).

Belongs to the nematode receptor-like protein sra family.

It localises to the membrane. The polypeptide is Serpentine receptor class alpha-33 (sra-33) (Caenorhabditis elegans).